Here is a 327-residue protein sequence, read N- to C-terminus: Undecaprenyl-phosphate 4-deoxy-4-formamido-L-arabinose transferase (327 aa).

2 consecutive transmembrane segments (helical) span residues 235–255 (LLSL…VLLV) and 270–290 (VFTL…GMGL).

The protein belongs to the glycosyltransferase 2 family.

Its subcellular location is the cell inner membrane. It carries out the reaction UDP-4-deoxy-4-formamido-beta-L-arabinose + di-trans,octa-cis-undecaprenyl phosphate = 4-deoxy-4-formamido-alpha-L-arabinopyranosyl di-trans,octa-cis-undecaprenyl phosphate + UDP. It participates in glycolipid biosynthesis; 4-amino-4-deoxy-alpha-L-arabinose undecaprenyl phosphate biosynthesis; 4-amino-4-deoxy-alpha-L-arabinose undecaprenyl phosphate from UDP-4-deoxy-4-formamido-beta-L-arabinose and undecaprenyl phosphate: step 1/2. The protein operates within bacterial outer membrane biogenesis; lipopolysaccharide biosynthesis. Catalyzes the transfer of 4-deoxy-4-formamido-L-arabinose from UDP to undecaprenyl phosphate. The modified arabinose is attached to lipid A and is required for resistance to polymyxin and cationic antimicrobial peptides. In Yersinia pseudotuberculosis serotype IB (strain PB1/+), this protein is Undecaprenyl-phosphate 4-deoxy-4-formamido-L-arabinose transferase.